The following is a 472-amino-acid chain: Succinate-semialdehyde dehydrogenase [NADP(+)] (472 aa).

NADP(+)-binding positions include tryptophan 134 to asparagine 135, lysine 158 to serine 161, and glycine 210 to serine 211. Catalysis depends on glutamate 232, which acts as the Proton acceptor. Leucine 233 provides a ligand contact to NADP(+). Residue cysteine 266 is the Nucleophile of the active site. NADP(+) is bound at residue glutamate 363.

The protein belongs to the aldehyde dehydrogenase family.

The enzyme catalyses succinate semialdehyde + NADP(+) + H2O = succinate + NADPH + 2 H(+). Catalyzes the NADP(+)-dependent oxidation of succinate semialdehyde to succinate. It is believed to be the main source of succinate semialdehyde dehydrogenase activity in Mycobacterium. This chain is Succinate-semialdehyde dehydrogenase [NADP(+)] (gabD1), found in Mycobacterium avium (strain 104).